A 934-amino-acid polypeptide reads, in one-letter code: Desmocollin 2-like protein (934 aa).

4 Cadherin domains span residues 167–274 (RWRP…APEF), 274–381 (FTGN…PPTF), 382–494 (KEKL…GPEF), and 495–600 (NPNI…IPVI). Residues 167–716 (RWRPLPFSVV…SASVSLGNYG (550 aa)) are Extracellular-facing. Asparagine 197, asparagine 296, and asparagine 316 each carry an N-linked (GlcNAc...) asparagine glycan. 3 N-linked (GlcNAc...) asparagine glycosylation sites follow: asparagine 509, asparagine 565, and asparagine 569. The helical transmembrane segment at 717–737 (ILALVLSGLLLLLLCLFLIFF) threads the bilayer. Residues 738–934 (CTTKRDKLQI…ICYTTNKTGK (197 aa)) lie on the Cytoplasmic side of the membrane.

As to expression, expressed at low levels in the brain and heart.

Its subcellular location is the cell junction. It localises to the desmosome. It is found in the cell membrane. A component of desmosome cell-cell junctions which are required for positive regulation of cellular adhesion. Involved in the interaction of plaque proteins and intermediate filaments mediating cell-cell adhesion. Involved in the formation and structural organization of desmosome cell-cell junctions during embryonic development. Required for embryogenesis, specifically for progression of epiboly and normal convergence-extension movements during gastrulation. Required for the development of desmosomal-rich midlines in the heart. Plays an important role in ventricular contraction and resulting heart stroke volume. This Danio rerio (Zebrafish) protein is Desmocollin 2-like protein.